A 279-amino-acid chain; its full sequence is MGRTYRTIGINLKAMPLGESDRLLSVFSRDRGLLKLVAPHSRGSRSRLGGRVDLFVVNDLFISPGRNLDRILQAETVATYQGLHHQLTTLTAAQYLGEVVLYQIHPQQPQPELFDWFCATLDQLQGASSRAALAILVRGLCGILRLGGIAPEWYQCHESGCKIAVPTADTDWRLGFSFAGGGVFRIRADHPVGNESVAGAGGDRQLTASEVRLGQWLAMPTTQFLARDEFLTQAEAYPLSVWLSLERVLRQYLQFHLEQPLRVPPLLDSCFSPVAVSQP.

It belongs to the RecO family.

Its function is as follows. Involved in DNA repair and RecF pathway recombination. In Thermosynechococcus vestitus (strain NIES-2133 / IAM M-273 / BP-1), this protein is DNA repair protein RecO.